A 471-amino-acid polypeptide reads, in one-letter code: Glutamate--tRNA ligase (471 aa).

A 'HIGH' region motif is present at residues 9–19 (PSPTGYLHVGG). 4 residues coordinate Zn(2+): cysteine 98, cysteine 100, cysteine 125, and histidine 127. The 'KMSKS' region motif lies at 237–241 (KLSKR). An ATP-binding site is contributed by lysine 240.

It belongs to the class-I aminoacyl-tRNA synthetase family. Glutamate--tRNA ligase type 1 subfamily. Monomer. It depends on Zn(2+) as a cofactor.

The protein localises to the cytoplasm. It carries out the reaction tRNA(Glu) + L-glutamate + ATP = L-glutamyl-tRNA(Glu) + AMP + diphosphate. Catalyzes the attachment of glutamate to tRNA(Glu) in a two-step reaction: glutamate is first activated by ATP to form Glu-AMP and then transferred to the acceptor end of tRNA(Glu). The polypeptide is Glutamate--tRNA ligase (Escherichia coli O1:K1 / APEC).